Here is a 729-residue protein sequence, read N- to C-terminus: Fatty acid oxidation complex subunit alpha (729 aa).

An enoyl-CoA hydratase/isomerase region spans residues 1–189 (MLYKGDTLYL…KIGLVDGVVK (189 aa)). Residue Asp296 participates in substrate binding. The interval 311–729 (ETPKQAAVLG…ARPVGSLKTA (419 aa)) is 3-hydroxyacyl-CoA dehydrogenase. Residues Met324, Asp343, 400–402 (VVE), Lys407, and Ser429 each bind NAD(+). Residue His450 is the For 3-hydroxyacyl-CoA dehydrogenase activity of the active site. NAD(+) is bound at residue Asn453. Substrate-binding residues include Asn500 and Tyr660. A disordered region spans residues 708 to 729 (RHNEPYYPPVEPARPVGSLKTA).

It in the N-terminal section; belongs to the enoyl-CoA hydratase/isomerase family. In the C-terminal section; belongs to the 3-hydroxyacyl-CoA dehydrogenase family. As to quaternary structure, heterotetramer of two alpha chains (FadB) and two beta chains (FadA).

The catalysed reaction is a (3S)-3-hydroxyacyl-CoA + NAD(+) = a 3-oxoacyl-CoA + NADH + H(+). It carries out the reaction a (3S)-3-hydroxyacyl-CoA = a (2E)-enoyl-CoA + H2O. It catalyses the reaction a 4-saturated-(3S)-3-hydroxyacyl-CoA = a (3E)-enoyl-CoA + H2O. The enzyme catalyses (3S)-3-hydroxybutanoyl-CoA = (3R)-3-hydroxybutanoyl-CoA. The catalysed reaction is a (3Z)-enoyl-CoA = a 4-saturated (2E)-enoyl-CoA. It carries out the reaction a (3E)-enoyl-CoA = a 4-saturated (2E)-enoyl-CoA. Its pathway is lipid metabolism; fatty acid beta-oxidation. In terms of biological role, involved in the aerobic and anaerobic degradation of long-chain fatty acids via beta-oxidation cycle. Catalyzes the formation of 3-oxoacyl-CoA from enoyl-CoA via L-3-hydroxyacyl-CoA. It can also use D-3-hydroxyacyl-CoA and cis-3-enoyl-CoA as substrate. The polypeptide is Fatty acid oxidation complex subunit alpha (Salmonella enteritidis PT4 (strain P125109)).